Reading from the N-terminus, the 258-residue chain is Tryptophan synthase alpha chain (258 aa).

Catalysis depends on proton acceptor residues Glu-52 and Asp-63.

This sequence belongs to the TrpA family. Tetramer of two alpha and two beta chains.

The catalysed reaction is (1S,2R)-1-C-(indol-3-yl)glycerol 3-phosphate + L-serine = D-glyceraldehyde 3-phosphate + L-tryptophan + H2O. It functions in the pathway amino-acid biosynthesis; L-tryptophan biosynthesis; L-tryptophan from chorismate: step 5/5. Functionally, the alpha subunit is responsible for the aldol cleavage of indoleglycerol phosphate to indole and glyceraldehyde 3-phosphate. In Streptococcus pneumoniae (strain 70585), this protein is Tryptophan synthase alpha chain.